Consider the following 130-residue polypeptide: UPF0225 protein CE1570 (130 aa).

This sequence belongs to the UPF0225 family.

In Corynebacterium efficiens (strain DSM 44549 / YS-314 / AJ 12310 / JCM 11189 / NBRC 100395), this protein is UPF0225 protein CE1570.